Here is a 108-residue protein sequence, read N- to C-terminus: Virion membrane protein OPG135 (108 aa).

The N-terminal stretch at 1–22 is a signal peptide; it reads MSCYTAILKSVGGLALFQVANG. Residues 23-45 are Intravirion-facing; sequence AIDLCRHFFMYFCEQKLRPNSFW. Residues 46–66 form a helical membrane-spanning segment; the sequence is FVVVRAIASMIMYLVLGIALL. Over 67-83 the chain is Virion surface; that stretch reads YISEQDDKKNTNNANTN. The interval 76 to 108 is disordered; sequence NTNNANTNNDSNSNNSNNDKRNESSINSNSSPK. Low complexity predominate over residues 77 to 92; that stretch reads TNNANTNNDSNSNNSN. Residues N84, N89, and N97 are each glycosylated (N-linked (GlcNAc...) asparagine; by host). Over residues 99-108 the composition is skewed to polar residues; the sequence is SSINSNSSPK.

Belongs to the oerthopoxvirus OPG135 family.

The protein resides in the virion membrane. Its subcellular location is the host cytoplasm. Functionally, envelope protein. Required for an early step in virion morphogenesis. In Vaccinia virus (strain Western Reserve) (VACV), this protein is Virion membrane protein OPG135 (OPG135).